The primary structure comprises 417 residues: Ankyrin repeat and SAM domain-containing protein 4B (417 aa).

A mediates localization to microvilli region spans residues 1–252 (MSTRYHQAAS…SGDFKEKLQL (252 aa)). 3 ANK repeats span residues 31-60 (DGMTPTLLAAYHGNLEALEIICSRGGDPDR), 64-93 (WGNTPLHFAASNGHAHCVSFLVNFGANIFA), and 97-126 (DLQTPLDAAASREQNECVALLDKAATAQNI). Residues 130–164 (KKVTRLKEQAQKNARRQIKECERLQEKHQNKMAHT) are a coiled coil. The segment at 151 to 195 (ERLQEKHQNKMAHTYSKEESGTLSSSKGTFSRSSPSNASAPGTFG) is disordered. Positions 171 to 190 (GTLSSSKGTFSRSSPSNASA) are enriched in polar residues. Residues 253 to 346 (SAEEDGSVHH…EWEEDVVDAT (94 aa)) are mediates interaction with MYO7B. S283 carries the phosphoserine modification. The disordered stretch occupies residues 305–330 (RQGASEADEGAADEEGEENGLKDDLP). A compositionally biased stretch (acidic residues) spans 310–322 (EADEGAADEEGEE). Positions 351–403 (FLLSQHLEEFLPIFKREQIDLEALLLCSDEDLQSIQMQLGPRKKVLNAINRRK) constitute an SAM domain. Positions 415–417 (TSL) match the PDZ-binding; mediates interaction with USH1C motif.

In terms of assembly, part of the IMAC/intermicrovillar adhesion complex/intermicrovillar tip-link complex composed of ANKS4B, MYO7B, USH1C, CDHR2 and CDHR5. Interacts with USH1C; the interaction is direct and is required for ANKS4B localization to the tip of microvilli. Interacts with MYO7B; the interaction is direct. May interact with HSPA5. Expressed in kidney and small intestine.

The protein resides in the cell projection. It localises to the microvillus. Its function is as follows. As part of the intermicrovillar adhesion complex/IMAC plays a role in epithelial brush border differentiation, controlling microvilli organization and length. Plays a role in assembly of the complex. May play a role in cellular response to endoplasmic reticulum stress. This chain is Ankyrin repeat and SAM domain-containing protein 4B, found in Homo sapiens (Human).